The sequence spans 196 residues: DnaA initiator-associating protein DiaA (196 aa).

An SIS domain is found at V34–V196.

This sequence belongs to the SIS family. DiaA subfamily. In terms of assembly, homotetramer; dimer of dimers.

Functionally, required for the timely initiation of chromosomal replication via direct interactions with the DnaA initiator protein. This Erwinia tasmaniensis (strain DSM 17950 / CFBP 7177 / CIP 109463 / NCPPB 4357 / Et1/99) protein is DnaA initiator-associating protein DiaA.